A 139-amino-acid chain; its full sequence is Trafficking protein particle complex subunit 2-like protein (139 aa).

The protein belongs to the TRAPP small subunits family. Sedlin subfamily. Component of the multisubunit TRAPP (transport protein particle) complex, which includes at least TRAPPC2, TRAPPC2L, TRAPPC3, TRAPPC3L, TRAPPC4, TRAPPC5, TRAPPC8, TRAPPC9, TRAPPC10, TRAPPC11 and TRAPPC12. Interacts with the heterodimer TRAPPC3-TRAPPC6A.

Its subcellular location is the cytoplasm. It is found in the perinuclear region. The protein resides in the endoplasmic reticulum. The protein localises to the golgi apparatus. May play a role in vesicular transport from endoplasmic reticulum to Golgi. The chain is Trafficking protein particle complex subunit 2-like protein (TRAPPC2L) from Bos taurus (Bovine).